The chain runs to 227 residues: Cytidylate kinase (227 aa).

12–20 (GPSGAGKGT) contributes to the ATP binding site.

Belongs to the cytidylate kinase family. Type 1 subfamily.

It localises to the cytoplasm. The catalysed reaction is CMP + ATP = CDP + ADP. The enzyme catalyses dCMP + ATP = dCDP + ADP. This chain is Cytidylate kinase, found in Escherichia fergusonii (strain ATCC 35469 / DSM 13698 / CCUG 18766 / IAM 14443 / JCM 21226 / LMG 7866 / NBRC 102419 / NCTC 12128 / CDC 0568-73).